Reading from the N-terminus, the 372-residue chain is Citrate synthase 2 (372 aa).

Residue histidine 257 is part of the active site. Residue serine 284 is modified to Phosphoserine. Aspartate 308 is a catalytic residue.

This sequence belongs to the citrate synthase family. In terms of assembly, homodimer.

It carries out the reaction oxaloacetate + acetyl-CoA + H2O = citrate + CoA + H(+). It participates in carbohydrate metabolism; tricarboxylic acid cycle; isocitrate from oxaloacetate: step 1/2. Functionally, might regulate the synthesis and function of enzymes involved in later enzymatic steps of Krebs cycle. Loss in activity results in sporulation defect. The polypeptide is Citrate synthase 2 (citZ) (Bacillus subtilis (strain 168)).